Here is a 240-residue protein sequence, read N- to C-terminus: Uridylate kinase (240 aa).

ATP is bound at residue 12 to 15 (KLSG). An involved in allosteric activation by GTP region spans residues 20 to 25 (GDKGFG). Glycine 54 is a UMP binding site. ATP is bound by residues glycine 55 and arginine 59. UMP is bound by residues aspartate 74 and 135–142 (TGSPYFST). ATP-binding residues include asparagine 163, tyrosine 169, and aspartate 172.

It belongs to the UMP kinase family. As to quaternary structure, homohexamer.

The protein localises to the cytoplasm. The catalysed reaction is UMP + ATP = UDP + ADP. Its pathway is pyrimidine metabolism; CTP biosynthesis via de novo pathway; UDP from UMP (UMPK route): step 1/1. With respect to regulation, allosterically activated by GTP. Inhibited by UTP. Catalyzes the reversible phosphorylation of UMP to UDP. This chain is Uridylate kinase, found in Limosilactobacillus reuteri (strain DSM 20016) (Lactobacillus reuteri).